Here is a 544-residue protein sequence, read N- to C-terminus: CTP synthase (544 aa).

The segment at 1–267 is amidoligase domain; it reads MTKFVFVTGG…AQRVLEILNL (267 aa). CTP is bound at residue serine 13. Serine 13 is a UTP binding site. Residue 14–19 coordinates ATP; it reads SIGKGI. L-glutamine is bound at residue tyrosine 54. Position 71 (aspartate 71) interacts with ATP. Mg(2+) is bound by residues aspartate 71 and glutamate 141. CTP contacts are provided by residues 148–150, 188–193, and lysine 224; these read DIE and KTKPTQ. Residues 188-193 and lysine 224 each bind UTP; that span reads KTKPTQ. One can recognise a Glutamine amidotransferase type-1 domain in the interval 292–534; it reads EIAIVGKYVR…IEAALRSRPQ (243 aa). Glycine 354 contributes to the L-glutamine binding site. Cysteine 381 (nucleophile; for glutamine hydrolysis) is an active-site residue. L-glutamine contacts are provided by residues 382–385, glutamate 405, and arginine 462; that span reads LGMQ. Catalysis depends on residues histidine 507 and glutamate 509.

Belongs to the CTP synthase family. As to quaternary structure, homotetramer.

The enzyme catalyses UTP + L-glutamine + ATP + H2O = CTP + L-glutamate + ADP + phosphate + 2 H(+). The catalysed reaction is L-glutamine + H2O = L-glutamate + NH4(+). It carries out the reaction UTP + NH4(+) + ATP = CTP + ADP + phosphate + 2 H(+). It functions in the pathway pyrimidine metabolism; CTP biosynthesis via de novo pathway; CTP from UDP: step 2/2. Its activity is regulated as follows. Allosterically activated by GTP, when glutamine is the substrate; GTP has no effect on the reaction when ammonia is the substrate. The allosteric effector GTP functions by stabilizing the protein conformation that binds the tetrahedral intermediate(s) formed during glutamine hydrolysis. Inhibited by the product CTP, via allosteric rather than competitive inhibition. Functionally, catalyzes the ATP-dependent amination of UTP to CTP with either L-glutamine or ammonia as the source of nitrogen. Regulates intracellular CTP levels through interactions with the four ribonucleotide triphosphates. In Synechococcus sp. (strain JA-2-3B'a(2-13)) (Cyanobacteria bacterium Yellowstone B-Prime), this protein is CTP synthase.